Consider the following 323-residue polypeptide: tRNA U34 carboxymethyltransferase (323 aa).

Residues Lys-91, Trp-105, Lys-110, Gly-130, 152–154 (DPT), 181–182 (IE), Met-196, Tyr-200, and Arg-315 contribute to the carboxy-S-adenosyl-L-methionine site.

This sequence belongs to the class I-like SAM-binding methyltransferase superfamily. CmoB family. As to quaternary structure, homotetramer.

The enzyme catalyses carboxy-S-adenosyl-L-methionine + 5-hydroxyuridine(34) in tRNA = 5-carboxymethoxyuridine(34) in tRNA + S-adenosyl-L-homocysteine + H(+). In terms of biological role, catalyzes carboxymethyl transfer from carboxy-S-adenosyl-L-methionine (Cx-SAM) to 5-hydroxyuridine (ho5U) to form 5-carboxymethoxyuridine (cmo5U) at position 34 in tRNAs. The sequence is that of tRNA U34 carboxymethyltransferase from Salmonella typhi.